We begin with the raw amino-acid sequence, 641 residues long: Chaperone protein DnaK (641 aa).

At T199 the chain carries Phosphothreonine; by autocatalysis. The segment covering 603–613 (YTQQGGTAGSE) has biased composition (polar residues). A disordered region spans residues 603-641 (YTQQGGTAGSETHSHEKAGGSGGDDVVDAEFEEVRDDKR). The segment covering 627–641 (DVVDAEFEEVRDDKR) has biased composition (acidic residues).

The protein belongs to the heat shock protein 70 family.

In terms of biological role, acts as a chaperone. The sequence is that of Chaperone protein DnaK from Methylococcus capsulatus (strain ATCC 33009 / NCIMB 11132 / Bath).